The following is a 937-amino-acid chain: Protein translocase subunit SecA (937 aa).

ATP is bound by residues Q86, G104–T108, and D493. The segment at L868–E889 is disordered. Positions 911, 913, 922, and 923 each coordinate Zn(2+). The segment at S915–S937 is disordered.

It belongs to the SecA family. Monomer and homodimer. Part of the essential Sec protein translocation apparatus which comprises SecA, SecYEG and auxiliary proteins SecDF. Other proteins may also be involved. Zn(2+) is required as a cofactor.

Its subcellular location is the cell membrane. It is found in the cytoplasm. It carries out the reaction ATP + H2O + cellular proteinSide 1 = ADP + phosphate + cellular proteinSide 2.. Its function is as follows. Part of the Sec protein translocase complex. Interacts with the SecYEG preprotein conducting channel. Has a central role in coupling the hydrolysis of ATP to the transfer of proteins into and across the cell membrane, serving as an ATP-driven molecular motor driving the stepwise translocation of polypeptide chains across the membrane. In Nocardioides sp. (strain ATCC BAA-499 / JS614), this protein is Protein translocase subunit SecA.